The sequence spans 2210 residues: Filamin-A (2210 aa).

Calponin-homology (CH) domains are found at residues 15–120 and 139–242; these read KIQQ…LHYS and HTPK…NSKL. Filamin repeat units lie at residues 249-347, 349-447, 448-544, 545-635, 638-734, 735-831, 832-929, 930-1022, 1023-1121, 1122-1217, 1218-1312, 1322-1423, 1424-1515, 1516-1603, 1606-1698, 1699-1796, 1799-1891, 1893-1986, 1988-2079, and 2116-2210; these read RPKT…PVKV, GHAG…PVKV, APLS…EVKV, GPKK…IAQI, RTDF…RVYV, GVPV…VVVE, QTVD…VVNV, KSGC…RVLV, EETV…VMTV, FPKS…KLEA, FPTG…SIKA, SEYI…KFHV, DSIT…FAKI, TGEG…KVTV, REVG…TVKV, AGEG…QFTV, LRDS…KVYV, PDAG…RIKV, KDVA…KVNA, and TFKS…QIDV.

This sequence belongs to the filamin family. In terms of assembly, interacts with Ten-m. In terms of tissue distribution, germline-specific in females (at protein level). Expressed in ovary.

The protein resides in the cytoplasm. It is found in the cytoskeleton. Its subcellular location is the cell membrane. In terms of biological role, involved in the germline ring canal formation. May tether actin microfilament within the ovarian ring canal to the cell membrane. Contributes to actin microfilaments organization. This chain is Filamin-A (cher), found in Drosophila melanogaster (Fruit fly).